A 99-amino-acid chain; its full sequence is Thylakoid membrane protein ssl2009 (99 aa).

The chain crosses the membrane as a helical span at residues Gly10 to Ala30. Residues Asn50 to His84 adopt a coiled-coil conformation.

Its subcellular location is the cellular thylakoid membrane. This chain is Thylakoid membrane protein ssl2009, found in Synechocystis sp. (strain ATCC 27184 / PCC 6803 / Kazusa).